The chain runs to 647 residues: Leucine aminopeptidase 2 (647 aa).

Substrate-binding positions include 169–171 (QCQ) and 295–300 (PYGGME). A Zn(2+)-binding site is contributed by histidine 324. Glutamate 325 functions as the Proton acceptor in the catalytic mechanism. Histidine 328 and glutamate 347 together coordinate Zn(2+). The active-site Proton donor is tyrosine 418.

This sequence belongs to the peptidase M1 family. Zn(2+) serves as cofactor.

The protein localises to the cytoplasm. The protein resides in the nucleus. The catalysed reaction is an epoxide + H2O = an ethanediol. In terms of biological role, aminopeptidase that preferentially cleaves di- and tripeptides. Also has low epoxide hydrolase activity (in vitro). Can hydrolyze the epoxide leukotriene LTA(4) but it forms preferentially 5,6-dihydroxy-7,9,11,14-eicosatetraenoic acid rather than the cytokine leukotriene B(4) as the product compared to the homologous mammalian enzyme (in vitro). This Yarrowia lipolytica (strain CLIB 122 / E 150) (Yeast) protein is Leucine aminopeptidase 2.